Here is a 213-residue protein sequence, read N- to C-terminus: Oxidase ustYa (213 aa).

The interval 1-26 (MAERSSNGYKEVPVRQSEESTIAEEE) is disordered. The chain crosses the membrane as a helical span at residues 48-68 (AVWFLIALLLLSNIGLLGGLI). N98 is a glycosylation site (N-linked (GlcNAc...) asparagine). Short sequence motifs (HXXHC) lie at residues 123–127 (HQLHC) and 150–154 (HLMHC).

This sequence belongs to the ustYa family.

It is found in the membrane. It functions in the pathway mycotoxin biosynthesis. Functionally, oxidase; part of the gene cluster that mediates the biosynthesis of the secondary metabolite ustiloxin B, an antimitotic tetrapeptide. First, ustA is processed by the subtilisin-like endoprotease Kex2 that is outside the ustiloxin B gene cluster, at the C-terminal side of Arg-Lys, after transfer to Golgi apparatus through the endoplasmic reticulum (ER). Cleavage by KEX2 generates 16 peptides YAIG-I to YAIG-XVI. To process the precursor peptide further, at least two peptidases are necessary to cleave the N-terminal and C-terminal sides of the Tyr-Ala-Ile-Gly core peptide which serves as backbone for the synthesis of ustiloxin B, through cyclization and modification of the tyrosine with a non-protein coding amino acid, norvaline. One of the two peptidases must be the serine peptidase ustP; and the other pepdidase is probably ustH. Macrocyclization of the core peptide derived from ustA requires the tyrosinase ustQ, as well as the homologous oxidases ustYa and ustYb, and leads to the production of the first cyclization product N-desmethylustiloxin F. For the formation of N-desmethylustiloxin F, three oxidation steps are required, hydroxylation at the benzylic position, hydroxylation at either the aromatic ring of Tyr or beta-position of Ile, and oxidative cyclization. UstQ may catalyze the oxidation of a phenol moiety, whereas the ustYa and ustYb are most likely responsible for the remaining two-step oxidations. N-desmethylustiloxin F is then methylated by ustM to yield ustiloxin F which in turn substrate of the cytochrome P450 monooxygenase ustC which catalyzes the formation of S-deoxyustiloxin H. The flavoprotein monooxygenases ustF1 and ustF2 then participate in the modification of the side chain of S-deoxyustiloxin H, leading to the synthesis of an oxime intermediate, via ustiloxin H. Finally, carboxylative dehydration performed by the cysteine desulfurase-like protein ustD yields ustiloxin B. The chain is Oxidase ustYa from Aspergillus flavus (strain ATCC 200026 / FGSC A1120 / IAM 13836 / NRRL 3357 / JCM 12722 / SRRC 167).